Consider the following 233-residue polypeptide: Rab-like protein 3 (233 aa).

A small GTPase-like region spans residues methionine 1 to aspartate 233. Residues glycine 16–serine 21, lysine 148–aspartate 150, and aspartate 179–cysteine 180 contribute to the GTP site.

Belongs to the small GTPase superfamily. Rab family. Homodimer.

Its function is as follows. Required for KRAS signaling regulation and modulation of cell proliferation. Regulator of KRAS prenylation, and probably prenylation of other small GTPases. Required for lymphocyte development and function. Not required for myeloid cell development. This chain is Rab-like protein 3 (rabl3), found in Danio rerio (Zebrafish).